A 185-amino-acid polypeptide reads, in one-letter code: Acireductone dioxygenase (185 aa).

His97, His99, Glu103, and His141 together coordinate Fe(2+). Ni(2+) is bound by residues His97, His99, Glu103, and His141.

The protein belongs to the acireductone dioxygenase (ARD) family. In terms of assembly, monomer. Requires Fe(2+) as cofactor. The cofactor is Ni(2+).

The catalysed reaction is 1,2-dihydroxy-5-(methylsulfanyl)pent-1-en-3-one + O2 = 3-(methylsulfanyl)propanoate + CO + formate + 2 H(+). It catalyses the reaction 1,2-dihydroxy-5-(methylsulfanyl)pent-1-en-3-one + O2 = 4-methylsulfanyl-2-oxobutanoate + formate + 2 H(+). Its pathway is amino-acid biosynthesis; L-methionine biosynthesis via salvage pathway; L-methionine from S-methyl-5-thio-alpha-D-ribose 1-phosphate: step 5/6. Functionally, catalyzes 2 different reactions between oxygen and the acireductone 1,2-dihydroxy-3-keto-5-methylthiopentene (DHK-MTPene) depending upon the metal bound in the active site. Fe-containing acireductone dioxygenase (Fe-ARD) produces formate and 2-keto-4-methylthiobutyrate (KMTB), the alpha-ketoacid precursor of methionine in the methionine recycle pathway. Ni-containing acireductone dioxygenase (Ni-ARD) produces methylthiopropionate, carbon monoxide and formate, and does not lie on the methionine recycle pathway. This chain is Acireductone dioxygenase, found in Stenotrophomonas maltophilia (strain K279a).